The primary structure comprises 1053 residues: Serine/threonine-protein phosphatase 6 regulatory ankyrin repeat subunit A (1053 aa).

ANK repeat units lie at residues 40 to 69 (EKRTPLHAAAYLGDAEIIELLILSGARVNA), 73 to 102 (KWLTPLHRAVASCSEEAVQVLLKHSADVNA), 106 to 135 (NWQTPLHIAAANKAVKCAEALVPLLSNVNV), 139 to 168 (AGRTALHHAAFSGHGEMVKLLLSRGANINA), 172 to 201 (KDRRAIHWAAYMGHIEVVKLLVSHGAEVTC), 205 to 234 (KSYTPLHAAASSGMISVVKYLLDLGVDMNE), 238 to 267 (YGNTPLHVACYNGQDVVVNELIDCGAIVNQ), 271 to 301 (KGFTPLHFAAASTHGALCLELLVGNGADVNM), 305 to 334 (DGKTPLHMTALHGRFSRSQTIIQSGAVIDC), 338 to 367 (NGNTPLHIAARYGHELLINTLITSGADTAK), 371 to 400 (HGMFPLHLAALSGFSDCCRKLLSSGFDIDT), 404 to 433 (FGRTCLHAAAAGGNLECLNLLLNTGADFNK), 437 to 466 (FGRSPLHYAAANCNYQCLFALVGSGASVND), 470 to 500 (RGCTPLHYAATSDTDGKCLEYLLRNDANPGI), 504 to 534 (QGYNAVHYSAAYGHRLCLQLIASETPLDVLM), 549 to 578 (ATISPLHLAAYHGHHQALEVLVQSLLDLDV), 582 to 611 (SGRTPLDLAAFKGHVECVDVLINQGASILV), 616 to 645 (LKRTPIHAAATNGHSECLRLLIGNAEPQNA), 652 to 681 (NGQTPLMLSVLNGHTDCVYSLLNKGANVDA), 685 to 714 (WGRTALHRGAVTGHEECVDALLQHGAKCLL), 718 to 747 (RGRTPIHLSAACGHIGVLGALLQSAASMDA), 755 to 784 (HGYTALHWACYNGHETCVELLLEQEVFQKT), 787 to 817 (NAFSPLHCAVINDNEGAAEMLIDTLGASIVN), 822 to 851 (KGRTPLHAAAFTDHVECLQLLLSHNAQVNS), 855 to 885 (TGKTPLMMAAENGQTNTVEMLVSSASAELTL), 889 to 918 (SKNTALHLACSKGHETSALLILEKITDRNL), and 925 to 954 (ALQTPLHVAARNGLTMVVQELLGKGASVLA). 2 positions are modified to phosphoserine: serine 1007 and serine 1011.

As to quaternary structure, protein phosphatase 6 (PP6) holoenzyme is proposed to be a heterotrimeric complex formed by the catalytic subunit, a SAPS domain-containing subunit (PP6R) and an ankyrin repeat-domain containing regulatory subunit (ARS). Interacts with PPP6C, PPP6R1 and PPP6R3. Interacts with PPP1C and HNRPK. In terms of processing, ubiquitinated by the ECS(RAB40C) complex leading to its degradation and decreased PP6 activity.

It localises to the nucleus. The protein resides in the nucleoplasm. It is found in the cytoplasm. The protein localises to the cytosol. Its subcellular location is the cell projection. It localises to the lamellipodium. Functionally, regulatory subunit of protein phosphatase 6 (PP6) that may be involved in the recognition of phosphoprotein substrates. Involved in the PP6-mediated dephosphorylation of NFKBIE opposing its degradation in response to TNF-alpha. Selectively inhibits the phosphatase activity of PPP1C. Targets PPP1C to modulate HNRPK phosphorylation. Involved in the PP6-mediated dephosphorylation of MOB1 and induced focal adhesion assembly during cell migration. The protein is Serine/threonine-protein phosphatase 6 regulatory ankyrin repeat subunit A of Homo sapiens (Human).